Here is a 316-residue protein sequence, read N- to C-terminus: Na(+)-translocating NADH-quinone reductase subunit C (316 aa).

The helical transmembrane segment at 13-33 (WYIILFIFVLSLIAGTLLSSV) threads the bilayer. At Thr280 the chain carries FMN phosphoryl threonine.

This sequence belongs to the NqrC family. As to quaternary structure, composed of six subunits; NqrA, NqrB, NqrC, NqrD, NqrE and NqrF. It depends on FMN as a cofactor.

Its subcellular location is the cell inner membrane. It catalyses the reaction a ubiquinone + n Na(+)(in) + NADH + H(+) = a ubiquinol + n Na(+)(out) + NAD(+). NQR complex catalyzes the reduction of ubiquinone-1 to ubiquinol by two successive reactions, coupled with the transport of Na(+) ions from the cytoplasm to the periplasm. NqrA to NqrE are probably involved in the second step, the conversion of ubisemiquinone to ubiquinol. In Chlamydia trachomatis serovar D (strain ATCC VR-885 / DSM 19411 / UW-3/Cx), this protein is Na(+)-translocating NADH-quinone reductase subunit C.